The sequence spans 256 residues: Ribonuclease 3-like protein 1 (256 aa).

The RNase III domain maps to 22-168 (AEVERALGGY…IVGAVYLDSK (147 aa)). Glu65, Asp154, and Glu157 together coordinate Mg(2+).

Mg(2+) is required as a cofactor. Mn(2+) serves as cofactor.

Cleaves double-stranded RNA (dsRNA). The polypeptide is Ribonuclease 3-like protein 1 (Oryza sativa subsp. japonica (Rice)).